We begin with the raw amino-acid sequence, 185 residues long: Large ribosomal subunit protein bL25 (185 aa).

It belongs to the bacterial ribosomal protein bL25 family. CTC subfamily. In terms of assembly, part of the 50S ribosomal subunit; part of the 5S rRNA/L5/L18/L25 subcomplex. Contacts the 5S rRNA. Binds to the 5S rRNA independently of L5 and L18.

In terms of biological role, this is one of the proteins that binds to the 5S RNA in the ribosome where it forms part of the central protuberance. The chain is Large ribosomal subunit protein bL25 from Chlamydia abortus (strain DSM 27085 / S26/3) (Chlamydophila abortus).